We begin with the raw amino-acid sequence, 93 residues long: Large ribosomal subunit protein uL23cz/uL23cy (93 aa).

This sequence belongs to the universal ribosomal protein uL23 family. In terms of assembly, part of the 50S ribosomal subunit.

It localises to the plastid. The protein resides in the chloroplast. Its function is as follows. Binds to 23S rRNA. This chain is Large ribosomal subunit protein uL23cz/uL23cy (rpl23-A), found in Coffea arabica (Arabian coffee).